The following is a 214-amino-acid chain: Orotate phosphoribosyltransferase (214 aa).

Lys26 contacts 5-phospho-alpha-D-ribose 1-diphosphate. An orotate-binding site is contributed by 34 to 35 (FF). Residues 72 to 73 (YK), Arg99, Lys100, Lys103, His105, and 124 to 132 (DDVITAGTA) each bind 5-phospho-alpha-D-ribose 1-diphosphate. Residues Thr128 and Arg157 each coordinate orotate.

It belongs to the purine/pyrimidine phosphoribosyltransferase family. PyrE subfamily. As to quaternary structure, homodimer. Mg(2+) is required as a cofactor.

The enzyme catalyses orotidine 5'-phosphate + diphosphate = orotate + 5-phospho-alpha-D-ribose 1-diphosphate. Its pathway is pyrimidine metabolism; UMP biosynthesis via de novo pathway; UMP from orotate: step 1/2. Its function is as follows. Catalyzes the transfer of a ribosyl phosphate group from 5-phosphoribose 1-diphosphate to orotate, leading to the formation of orotidine monophosphate (OMP). This is Orotate phosphoribosyltransferase from Pseudomonas fluorescens (strain ATCC BAA-477 / NRRL B-23932 / Pf-5).